Consider the following 530-residue polypeptide: Synembryn-like chaperone C3E7.04c (530 aa).

The chain crosses the membrane as a helical span at residues 492–512 (SFIYHCYHSFVGPIHILLLMF).

It belongs to the synembryn family.

Its subcellular location is the membrane. Functionally, chaperone that specifically binds and folds some, but not all, nascent G alpha proteins prior to G protein heterotrimer formation, promoting their stability and activity. Also acts as a guanine nucleotide exchange factor (GEF) for G alpha proteins by stimulating exchange of bound GDP for free GTP. The polypeptide is Synembryn-like chaperone C3E7.04c (Schizosaccharomyces pombe (strain 972 / ATCC 24843) (Fission yeast)).